A 338-amino-acid chain; its full sequence is D-erythrose-4-phosphate dehydrogenase (338 aa).

11–12 (RI) serves as a coordination point for NAD(+). Substrate is bound by residues 153-155 (SCT), Arg199, 212-213 (TK), and Arg235. Catalysis depends on Cys154, which acts as the Nucleophile. Asn317 serves as a coordination point for NAD(+).

Belongs to the glyceraldehyde-3-phosphate dehydrogenase family. Epd subfamily. As to quaternary structure, homotetramer.

It localises to the cytoplasm. It catalyses the reaction D-erythrose 4-phosphate + NAD(+) + H2O = 4-phospho-D-erythronate + NADH + 2 H(+). Its pathway is cofactor biosynthesis; pyridoxine 5'-phosphate biosynthesis; pyridoxine 5'-phosphate from D-erythrose 4-phosphate: step 1/5. Functionally, catalyzes the NAD-dependent conversion of D-erythrose 4-phosphate to 4-phosphoerythronate. The protein is D-erythrose-4-phosphate dehydrogenase of Shewanella baltica (strain OS223).